We begin with the raw amino-acid sequence, 22 residues long: Peroxidase 5 (22 aa).

Belongs to the peroxidase family. Classical plant (class III) peroxidase subfamily. Heme b is required as a cofactor. Ca(2+) serves as cofactor.

Its subcellular location is the secreted. The protein resides in the cell wall. It carries out the reaction 2 a phenolic donor + H2O2 = 2 a phenolic radical donor + 2 H2O. In terms of biological role, removal of H(2)O(2), oxidation of toxic reductants, biosynthesis and degradation of lignin, suberization, auxin catabolism, response to environmental stresses such as wounding, pathogen attack and oxidative stress. These functions might be dependent on each isozyme/isoform in each plant tissue. This chain is Peroxidase 5, found in Cycas revoluta (Sago palm).